Here is a 246-residue protein sequence, read N- to C-terminus: Exosome complex component Rrp41 (246 aa).

This sequence belongs to the RNase PH family. Rrp41 subfamily. In terms of assembly, component of the archaeal exosome complex. Forms a hexameric ring-like arrangement composed of 3 Rrp41-Rrp42 heterodimers. The hexameric ring associates with a trimer of Rrp4 and/or Csl4 subunits.

It localises to the cytoplasm. Its function is as follows. Catalytic component of the exosome, which is a complex involved in RNA degradation. Has 3'-&gt;5' exoribonuclease activity. Can also synthesize heteromeric RNA-tails. This Pyrobaculum arsenaticum (strain DSM 13514 / JCM 11321 / PZ6) protein is Exosome complex component Rrp41.